The chain runs to 355 residues: MSERATYAARRVLPDAPLLAAAEGRAPGRRPVWFMRQAGRSLPEYREIRSGIGMLESCFDPALVCEITMQPVRRHGVDAAILFSDIVVPLKAAGIDLDIVAGTGPVVANPVRSIADVAALPRLVPEEVGAVAQAVQLLTAELGSTPLIGFAGAPFTLASYLVEGGPSRNHERTKALMHSDPKTWHALLGTLADTTITFLQAQLRAGVDAIQLFDSWAGALSLAEYREFVLPHSERVFAEVESAKVPRIHFGVGTGELLGAMGEAGADVVGVDWRIPLDVAARRVGPGKALQGNLDPAVLFAGSAAVEKQVRRITAEADAALAAGATGHIFNLGHGVLPDTDPGALTALVELVHSL.

Residues 36–40, D85, Y160, S215, and H334 contribute to the substrate site; that span reads RQAGR.

Belongs to the uroporphyrinogen decarboxylase family. Homodimer.

The protein resides in the cytoplasm. The enzyme catalyses uroporphyrinogen III + 4 H(+) = coproporphyrinogen III + 4 CO2. It functions in the pathway porphyrin-containing compound metabolism; protoporphyrin-IX biosynthesis; coproporphyrinogen-III from 5-aminolevulinate: step 4/4. In terms of biological role, catalyzes the decarboxylation of four acetate groups of uroporphyrinogen-III to yield coproporphyrinogen-III. This Rhodococcus opacus (strain B4) protein is Uroporphyrinogen decarboxylase.